The primary structure comprises 212 residues: 3-isopropylmalate dehydratase small subunit (212 aa).

It belongs to the LeuD family. LeuD type 1 subfamily. Heterodimer of LeuC and LeuD.

It catalyses the reaction (2R,3S)-3-isopropylmalate = (2S)-2-isopropylmalate. It functions in the pathway amino-acid biosynthesis; L-leucine biosynthesis; L-leucine from 3-methyl-2-oxobutanoate: step 2/4. In terms of biological role, catalyzes the isomerization between 2-isopropylmalate and 3-isopropylmalate, via the formation of 2-isopropylmaleate. The chain is 3-isopropylmalate dehydratase small subunit from Pseudomonas aeruginosa (strain LESB58).